A 232-amino-acid polypeptide reads, in one-letter code: Large ribosomal subunit protein uL1 (232 aa).

It belongs to the universal ribosomal protein uL1 family. As to quaternary structure, part of the 50S ribosomal subunit.

Binds directly to 23S rRNA. The L1 stalk is quite mobile in the ribosome, and is involved in E site tRNA release. In terms of biological role, protein L1 is also a translational repressor protein, it controls the translation of the L11 operon by binding to its mRNA. This is Large ribosomal subunit protein uL1 from Clostridium novyi (strain NT).